The sequence spans 879 residues: Beta-mannosidase (879 aa).

Residues 1–19 (MHLHLLLILALFRAGCVVA) form the signal peptide. N-linked (GlcNAc...) asparagine glycosylation is found at Asn-35, Asn-77, Asn-89, and Asn-113. A disulfide bond links Cys-167 and Cys-176. 190–192 (WDW) serves as a coordination point for substrate. N-linked (GlcNAc...) asparagine glycosylation is found at Asn-226, Asn-297, and Asn-302. Asn-456 contributes to the substrate binding site. The Proton donor role is filled by Glu-457. 3 disulfide bridges follow: Cys-540–Cys-629, Cys-732–Cys-761, and Cys-764–Cys-769. Catalysis depends on Glu-554, which acts as the Nucleophile. A glycan (N-linked (GlcNAc...) asparagine) is linked at Asn-736. Asn-803 and Asn-807 each carry an N-linked (GlcNAc...) asparagine glycan.

It belongs to the glycosyl hydrolase 2 family. Monomer. As to expression, highest level in liver, high levels in lung, testis, skin and spleen, moderate level in thymus. Activity found in plasma, kidney, liver, spleen, pancreas, brain, testis, epididymis, heart, lung and skeletal muscle.

It localises to the lysosome. The enzyme catalyses Hydrolysis of terminal, non-reducing beta-D-mannose residues in beta-D-mannosides.. It functions in the pathway glycan metabolism; N-glycan degradation. Functionally, exoglycosidase that cleaves the single beta-linked mannose residue from the non-reducing end of all N-linked glycoprotein oligosaccharides. The chain is Beta-mannosidase from Mus musculus (Mouse).